The primary structure comprises 65 residues: Large ribosomal subunit protein bL35 (65 aa).

The tract at residues Gly20 to Arg42 is disordered.

It belongs to the bacterial ribosomal protein bL35 family.

The chain is Large ribosomal subunit protein bL35 from Syntrophus aciditrophicus (strain SB).